The sequence spans 119 residues: Large ribosomal subunit protein bL20 (119 aa).

Belongs to the bacterial ribosomal protein bL20 family.

Binds directly to 23S ribosomal RNA and is necessary for the in vitro assembly process of the 50S ribosomal subunit. It is not involved in the protein synthesizing functions of that subunit. This chain is Large ribosomal subunit protein bL20, found in Alcanivorax borkumensis (strain ATCC 700651 / DSM 11573 / NCIMB 13689 / SK2).